Here is a 376-residue protein sequence, read N- to C-terminus: Dihydroorotate dehydrogenase (quinone) (376 aa).

Residues 78–82 (AGFDK) and Thr102 each bind FMN. Lys82 provides a ligand contact to substrate. 127–131 (NRMGF) is a binding site for substrate. 2 residues coordinate FMN: Asn157 and Asn190. Asn190 lines the substrate pocket. Ser193 functions as the Nucleophile in the catalytic mechanism. Asn195 serves as a coordination point for substrate. Lys228 and Thr256 together coordinate FMN. 257-258 (NT) lines the substrate pocket. FMN is bound by residues Gly286, Gly315, and 336–337 (YT).

Belongs to the dihydroorotate dehydrogenase family. Type 2 subfamily. In terms of assembly, monomer. The cofactor is FMN.

Its subcellular location is the cell membrane. The catalysed reaction is (S)-dihydroorotate + a quinone = orotate + a quinol. It participates in pyrimidine metabolism; UMP biosynthesis via de novo pathway; orotate from (S)-dihydroorotate (quinone route): step 1/1. Catalyzes the conversion of dihydroorotate to orotate with quinone as electron acceptor. This chain is Dihydroorotate dehydrogenase (quinone), found in Nostoc sp. (strain PCC 7120 / SAG 25.82 / UTEX 2576).